The following is a 328-amino-acid chain: Neuropeptides B/W receptor type 1 (328 aa).

Over 1 to 37 (MDNASFSEPWPANASGPDPALSCSNASTLAPLPAPLA) the chain is Extracellular. N-linked (GlcNAc...) asparagine glycans are attached at residues N3, N13, and N25. Residues 38–61 (VAVPVVYAVICAVGLAGNSAVLYV) form a helical membrane-spanning segment. At 62 to 72 (LLRAPRMKTVT) the chain is on the cytoplasmic side. A helical membrane pass occupies residues 73 to 97 (NLFILNLAIADELFTLVLPINIADF). At 98–112 (LLRQWPFGELMCKLI) the chain is on the extracellular side. The cysteines at positions 109 and 188 are disulfide-linked. The helical transmembrane segment at 113–132 (VAIDQYNTFSSLYFLTVMSA) threads the bilayer. The Cytoplasmic portion of the chain corresponds to 133–157 (DRYLVVLATAESRRVAGRTYSAARA). Residues 158 to 177 (VSLAVWGIVTLVVLPFAVFA) form a helical membrane-spanning segment. The Extracellular portion of the chain corresponds to 178–202 (RLDDEQGRRQCVLVFPQPEAFWWRA). The chain crosses the membrane as a helical span at residues 203–224 (SRLYTLVLGFAIPVSTICVLYT). Topologically, residues 225–248 (TLLCRLHAMRLDSHAKALERAKKR) are cytoplasmic. A helical membrane pass occupies residues 249–273 (VTFLVVAILAVCLLCWTPYHLSTVV). The Extracellular segment spans residues 274–283 (ALTTDLPQTP). A helical transmembrane segment spans residues 284–298 (LVIAISYFITSLSYA). The Cytoplasmic segment spans residues 299–328 (NSCLNPFLYAFLDASFRRNLRQLITCRAAA).

The protein belongs to the G-protein coupled receptor 1 family. Found in cerebellum and frontal cortex. Detected at high levels in hippocampus, amygdala and trachea; at moderate levels in fetal brain, pituitary gland and prostate. Not in caudate, accumbens, kidney or liver. Also detected at high levels in lung carcinoma.

The protein localises to the cell membrane. Functionally, interacts specifically with a number of opioid ligands. Receptor for neuropeptides B and W, which may be involved in neuroendocrine system regulation, food intake and the organization of other signals. Has a higher affinity for neuropeptide B. In Homo sapiens (Human), this protein is Neuropeptides B/W receptor type 1 (NPBWR1).